A 246-amino-acid polypeptide reads, in one-letter code: Proteasome subunit alpha (246 aa).

Belongs to the peptidase T1A family. The 20S proteasome core is composed of 14 alpha and 14 beta subunits that assemble into four stacked heptameric rings, resulting in a barrel-shaped structure. The two inner rings, each composed of seven catalytic beta subunits, are sandwiched by two outer rings, each composed of seven alpha subunits. The catalytic chamber with the active sites is on the inside of the barrel. Has a gated structure, the ends of the cylinder being occluded by the N-termini of the alpha-subunits. Is capped by the proteasome-associated ATPase, ARC. Can also interact with the bacterial proteasome activator Bpa through the C-terminal hydrophobic-tyrosine-X motif (HbYX motif) of Bpa; Bpa forms a homooligomeric ring-like structure which stacks co-axially with the proteasomal alpha-rings. Pupylated at an undetermined lysine residue by the prokaryotic ubiquitin-like protein Pup with the help of the ligase PafA, which leads to its degradation by the proteasome and thereby constitutes a negative auto-regulation.

It localises to the cytoplasm. Its pathway is protein degradation; proteasomal Pup-dependent pathway. Its activity is regulated as follows. The formation of the proteasomal ATPase ARC-20S proteasome complex, likely via the docking of the C-termini of ARC into the intersubunit pockets in the alpha-rings, may trigger opening of the gate for substrate entry. Interconversion between the open-gate and close-gate conformations leads to a dynamic regulation of the 20S proteasome proteolysis activity. PPS auto-regulates its own activity via pupylation and degradation of its components. Peptidolytic activity is inhibited by N-acetyl-Leu-Leu-norleucinal (Ac-LLnL) in vitro. Functionally, component of the proteasome core, a large protease complex with broad specificity involved in protein degradation. The M.smegmatis proteasome is able to cleave oligopeptides after hydrophobic residues, thus displaying chymotrypsin-like activity. In complex with the ATPase Mpa, degrades protein targets conjugated to a prokaryotic ubiquitin-like protein (Pup). Identified substrates of the M.smegmatis proteasome are the pupylated SodA and Ino1 proteins. The Pup-proteasome system (PPS) is essential for survival under starvation; PPS likely functions to recycle amino acids under nitrogen starvation, thereby enabling the cell to maintain basal metabolic activities. The sequence is that of Proteasome subunit alpha from Mycolicibacterium smegmatis (strain ATCC 700084 / mc(2)155) (Mycobacterium smegmatis).